The primary structure comprises 166 residues: NADH-quinone oxidoreductase subunit A (166 aa).

Transmembrane regions (helical) follow at residues 16 to 36 (FAVF…GAYF), 68 to 88 (FYLV…LYAW), and 98 to 118 (IGFI…FYLV). A disordered region spans residues 141–166 (RYASSHPQDISQELSVAGSQQANESR).

Belongs to the complex I subunit 3 family. As to quaternary structure, NDH-1 is composed of 13 different subunits. Subunits NuoA, H, J, K, L, M, N constitute the membrane sector of the complex.

Its subcellular location is the cell inner membrane. It catalyses the reaction a quinone + NADH + 5 H(+)(in) = a quinol + NAD(+) + 4 H(+)(out). Its function is as follows. NDH-1 shuttles electrons from NADH, via FMN and iron-sulfur (Fe-S) centers, to quinones in the respiratory chain. The immediate electron acceptor for the enzyme in this species is believed to be ubiquinone. Couples the redox reaction to proton translocation (for every two electrons transferred, four hydrogen ions are translocated across the cytoplasmic membrane), and thus conserves the redox energy in a proton gradient. The sequence is that of NADH-quinone oxidoreductase subunit A from Yersinia pseudotuberculosis serotype O:1b (strain IP 31758).